Consider the following 1056-residue polypeptide: PH and SEC7 domain-containing protein 4 (1056 aa).

Residues 25 to 42 (LEPHPGECPRETCSHEDP) show a composition bias toward basic and acidic residues. Disordered regions lie at residues 25-71 (LEPH…SGVE), 87-149 (CQEQ…QNRS), 195-239 (LPGD…QWGA), 340-362 (GAPAAPPGHGESEGDRLGPAPSA), 388-533 (VQPW…GDVQ), and 546-581 (LRTPMNSSWLPGSPMPQAQSPEEGQRPPAGDKLANG). Composition is skewed to polar residues over residues 88-99 (QEQTRATDPPES) and 128-137 (NTASPGSPVN). Ser131, Ser134, and Ser143 each carry phosphoserine. Residues 207 to 220 (ENEDSGEDSSEPEG) are compositionally biased toward acidic residues. At Ser413 the chain carries Phosphoserine. Residues 414 to 423 (QDRDEREGGH) show a composition bias toward basic and acidic residues. Residues 438 to 456 (RSPASSPEPSSPESESRGP) are compositionally biased toward low complexity. Phosphoserine occurs at positions 448, 469, and 491. Composition is skewed to polar residues over residues 466–476 (QEGSPQLQHHS) and 486–502 (DASQSSLLETDGEQPSS). The span at 504-522 (KKKEAGEAPKPGEEVKSEG) shows a compositional bias: basic and acidic residues. The region spanning 544–736 (ENLRTPMNSS…KALYWSIRSE (193 aa)) is the SEC7 domain. Residues 548-567 (TPMNSSWLPGSPMPQAQSPE) are compositionally biased toward polar residues. A PH domain is found at 776-892 (PTYKQGILAR…WIARINLAAA (117 aa)). The stretch at 921 to 976 (SSLEEQHRSHENCLDAAADDLLDLQRNLPERRGRGRELEEHRLRKEYLEYEKTRYE) forms a coiled coil. Residues 1004–1056 (AGGTREPKLSLKKSHSSPSLHQDEAPTTAKVKRNISERRTYRKIIPKRNRNQL) form a disordered region. Ser1019 and Ser1022 each carry phosphoserine. Over residues 1043 to 1056 (TYRKIIPKRNRNQL) the composition is skewed to basic residues.

In terms of tissue distribution, widely expressed. Highest levels of expression are found in placenta, pancreas, spleen, thymus and peripheral blood.

Its subcellular location is the cell membrane. The protein localises to the cell projection. The protein resides in the ruffle membrane. Its function is as follows. Guanine nucleotide exchange factor for ARF6 and ARL14/ARF7. Through ARL14 activation, controls the movement of MHC class II-containing vesicles along the actin cytoskeleton in dendritic cells. Involved in membrane recycling. Interacts with several phosphatidylinositol phosphate species, including phosphatidylinositol 3,4-bisphosphate, phosphatidylinositol 3,5-bisphosphate and phosphatidylinositol 4,5-bisphosphate. In Homo sapiens (Human), this protein is PH and SEC7 domain-containing protein 4 (PSD4).